Here is a 119-residue protein sequence, read N- to C-terminus: Large ribosomal subunit protein bL20 (119 aa).

This sequence belongs to the bacterial ribosomal protein bL20 family.

Binds directly to 23S ribosomal RNA and is necessary for the in vitro assembly process of the 50S ribosomal subunit. It is not involved in the protein synthesizing functions of that subunit. The chain is Large ribosomal subunit protein bL20 from Acidithiobacillus ferrooxidans (strain ATCC 23270 / DSM 14882 / CIP 104768 / NCIMB 8455) (Ferrobacillus ferrooxidans (strain ATCC 23270)).